We begin with the raw amino-acid sequence, 1189 residues long: Putative structural protein VP1 (1189 aa).

In terms of domain architecture, PPPDE spans 981–1187 (TPTKKLLSSD…YVNALRGDLS (207 aa)). Catalysis depends on residues histidine 1004 and cysteine 1147.

Its subcellular location is the virion. This Aedes pseudoscutellaris reovirus (isolate France) (ApRV) protein is Putative structural protein VP1 (S1).